The sequence spans 482 residues: MTKFRLRYAPSPTGFLHIGNTRTALMNYLFAKHYNGDFIVRIEDTDLERNVEGAIESQFENLNWLGINADESFLKPGEEKYGKYMQSQKFGRYQELAEKLISIKKAYRCFCTTEELEKDYEDQVAKGIVATKYSGKCSRLSESEIESNLKSNKDFSIRFLVPETTLNIKDFIKGEITFDSKELGDFVILKTNKIATYNFAVVVDDFDMEISHVLRGEEHISNTPRQILIYQAFGWETPQFGHMSLIVDSTGKKLSKRSGNALFFIEQYKNQGYLPEAMFNYISLLGWSPIGEKELLTKQELISMFDDKRFSKSPSTFDMTKMKWINSQYMKALSEEEYLEFTKKYINTEMFNTKEKSEDWLNQVLLLFKKELEFADQINNHLNIFFNEVDVTSETIEILKTIEEHESVIKEFETQISTLNEWEIENIKSLIKLVSENTGKKGKDLFMPIRIASSSSEHGPSLADVIYLLGKDKVLANIAKVK.

The 'HIGH' region motif lies at P10–N20. Residues K253–R257 carry the 'KMSKS' region motif. K256 contacts ATP.

This sequence belongs to the class-I aminoacyl-tRNA synthetase family. Glutamate--tRNA ligase type 1 subfamily. Monomer.

The protein resides in the cytoplasm. The enzyme catalyses tRNA(Glu) + L-glutamate + ATP = L-glutamyl-tRNA(Glu) + AMP + diphosphate. Its function is as follows. Catalyzes the attachment of glutamate to tRNA(Glu) in a two-step reaction: glutamate is first activated by ATP to form Glu-AMP and then transferred to the acceptor end of tRNA(Glu). The protein is Glutamate--tRNA ligase of Mesoplasma florum (strain ATCC 33453 / NBRC 100688 / NCTC 11704 / L1) (Acholeplasma florum).